We begin with the raw amino-acid sequence, 630 residues long: Coiled-coil domain-containing protein 120 (630 aa).

Residues 31 to 70 (RLRGLLDRQRTLQEALSLKLQELRKVCLQEAELTGQLPPE) are involved in CYTH2-binding. Residues 109–173 (ELALEALERE…LRDVRARLGL (65 aa)) are a coiled coil. 2 stretches are compositionally biased toward low complexity: residues 212-222 (HSESSSLSESG) and 282-297 (ASPT…SASS). Disordered regions lie at residues 212 to 435 (HSES…GAPR) and 457 to 534 (GGGT…NPLL). Residues 326–335 (RQWSGSQDSQ) are compositionally biased toward polar residues. Serine 358 and serine 360 each carry phosphoserine. The span at 421–434 (ARPSSAAPASRGAP) shows a compositional bias: low complexity. Arginine 435 carries the post-translational modification Omega-N-methylarginine.

Interacts with NIN and CEP170; leading to recruit them to centrosomes. Directly interacts with CYTH2; this interaction stabilizes CCDC120, possibly by preventing ubiquitination. Ubiquitinated; interaction with CYTH2 may prevent ubiquitination.

Its subcellular location is the cytoplasm. It is found in the cytoskeleton. It localises to the microtubule organizing center. The protein resides in the centrosome. The protein localises to the centriole. Its subcellular location is the cell projection. It is found in the neuron projection. It localises to the growth cone. The protein resides in the endosome. Its function is as follows. Centriolar protein required for centriole subdistal appendage assembly and microtubule anchoring in interphase cells. Together with CCDC68, cooperate with subdistal appendage components ODF2, NIN and CEP170 for hierarchical subdistal appendage assembly. Recruits NIN and CEP170 to centrosomes. Also required for neurite growth. Localizes CYTH2 to vesicles to allow its transport along neurites, and subsequent ARF6 activation and neurite growth. The protein is Coiled-coil domain-containing protein 120 (CCDC120) of Homo sapiens (Human).